Reading from the N-terminus, the 51-residue chain is Large ribosomal subunit protein bL33 (51 aa).

The disordered stretch occupies residues 1–23; that stretch reads MREKIKLESSAGTGHFYTTTKNK. Positions 10 to 20 are enriched in polar residues; that stretch reads SAGTGHFYTTT.

The protein belongs to the bacterial ribosomal protein bL33 family.

This Nitrosomonas eutropha (strain DSM 101675 / C91 / Nm57) protein is Large ribosomal subunit protein bL33.